Consider the following 247-residue polypeptide: Probable transcriptional regulatory protein ETA_14870 (247 aa).

Positions M1–K20 are disordered.

This sequence belongs to the TACO1 family.

The protein localises to the cytoplasm. In Erwinia tasmaniensis (strain DSM 17950 / CFBP 7177 / CIP 109463 / NCPPB 4357 / Et1/99), this protein is Probable transcriptional regulatory protein ETA_14870.